Consider the following 124-residue polypeptide: uncharacterized protein (124 aa).

Functionally, not required for the biogenesis of c-type cytochromes. This is an uncharacterized protein from Rhodobacter capsulatus (strain ATCC BAA-309 / NBRC 16581 / SB1003).